The following is a 256-amino-acid chain: Alcohol dehydrogenase (256 aa).

NAD(+) is bound at residue 12-35; sequence FVAGLGGIGLDTSKELVKRDLKNL. Residue Ser140 participates in substrate binding. The active-site Proton acceptor is Tyr153.

The protein belongs to the short-chain dehydrogenases/reductases (SDR) family. In terms of assembly, homodimer.

It catalyses the reaction a primary alcohol + NAD(+) = an aldehyde + NADH + H(+). The catalysed reaction is a secondary alcohol + NAD(+) = a ketone + NADH + H(+). The chain is Alcohol dehydrogenase (Adh) from Drosophila yakuba (Fruit fly).